The chain runs to 300 residues: Urease accessory protein UreD (300 aa).

Belongs to the UreD family. UreD, UreF and UreG form a complex that acts as a GTP-hydrolysis-dependent molecular chaperone, activating the urease apoprotein by helping to assemble the nickel containing metallocenter of UreC. The UreE protein probably delivers the nickel.

It is found in the cytoplasm. In terms of biological role, required for maturation of urease via the functional incorporation of the urease nickel metallocenter. This Prochlorococcus marinus (strain MIT 9215) protein is Urease accessory protein UreD.